Consider the following 90-residue polypeptide: MALDSAKKAEIVAKFARKEGDTGSPEVQIALLTARIAELTEHLKVFKKDFSSRLGLLKLVGQRKRLLKYLKNKDYTTYSKLIVELGIRDK.

It belongs to the universal ribosomal protein uS15 family. Part of the 30S ribosomal subunit. Forms a bridge to the 50S subunit in the 70S ribosome, contacting the 23S rRNA.

Its function is as follows. One of the primary rRNA binding proteins, it binds directly to 16S rRNA where it helps nucleate assembly of the platform of the 30S subunit by binding and bridging several RNA helices of the 16S rRNA. Forms an intersubunit bridge (bridge B4) with the 23S rRNA of the 50S subunit in the ribosome. The protein is Small ribosomal subunit protein uS15 of Campylobacter curvus (strain 525.92).